Here is a 1409-residue protein sequence, read N- to C-terminus: Copia protein (1409 aa).

The CCHC-type zinc-finger motif lies at 230–247 (VKCHHCGREGHIKKDCFH). The active-site For protease activity is D292. An Integrase catalytic domain is found at 476-644 (HIKRPLFVVH…TPYEMWHNKK (169 aa)). 2 disordered regions span residues 760-780 (SKES…QTEF) and 805-851 (NESK…NDGI). Residues 827–841 (ESRESETAEHLKEIG) are compositionally biased toward basic and acidic residues.

This is Copia protein (GIP) from Drosophila melanogaster (Fruit fly).